The chain runs to 171 residues: Ribosome maturation factor RimM (171 aa).

The PRC barrel domain maps to 97-170; it reads EGEYYYHEII…LVTIHVMEGL (74 aa).

Belongs to the RimM family. In terms of assembly, binds ribosomal protein uS19.

The protein resides in the cytoplasm. In terms of biological role, an accessory protein needed during the final step in the assembly of 30S ribosomal subunit, possibly for assembly of the head region. Essential for efficient processing of 16S rRNA. May be needed both before and after RbfA during the maturation of 16S rRNA. It has affinity for free ribosomal 30S subunits but not for 70S ribosomes. The protein is Ribosome maturation factor RimM of Bacillus cereus (strain ATCC 14579 / DSM 31 / CCUG 7414 / JCM 2152 / NBRC 15305 / NCIMB 9373 / NCTC 2599 / NRRL B-3711).